The following is a 364-amino-acid chain: 3-isopropylmalate dehydrogenase (364 aa).

An NAD(+)-binding site is contributed by 79–92 (GPKWEHLPPDQQPE). Substrate is bound by residues Arg-100, Arg-110, Arg-139, and Asp-228. The Mg(2+) site is built by Asp-228, Asp-252, and Asp-256. 286-298 (GSAPDIAGKNIAN) contacts NAD(+).

It belongs to the isocitrate and isopropylmalate dehydrogenases family. LeuB type 1 subfamily. Homodimer. Requires Mg(2+) as cofactor. Mn(2+) is required as a cofactor.

Its subcellular location is the cytoplasm. The enzyme catalyses (2R,3S)-3-isopropylmalate + NAD(+) = 4-methyl-2-oxopentanoate + CO2 + NADH. It functions in the pathway amino-acid biosynthesis; L-leucine biosynthesis; L-leucine from 3-methyl-2-oxobutanoate: step 3/4. Catalyzes the oxidation of 3-carboxy-2-hydroxy-4-methylpentanoate (3-isopropylmalate) to 3-carboxy-4-methyl-2-oxopentanoate. The product decarboxylates to 4-methyl-2 oxopentanoate. In Escherichia coli (strain UTI89 / UPEC), this protein is 3-isopropylmalate dehydrogenase.